We begin with the raw amino-acid sequence, 254 residues long: tRNA pseudouridine synthase A (254 aa).

Aspartate 52 acts as the Nucleophile in catalysis. A substrate-binding site is contributed by tyrosine 111.

It belongs to the tRNA pseudouridine synthase TruA family. In terms of assembly, homodimer.

It carries out the reaction uridine(38/39/40) in tRNA = pseudouridine(38/39/40) in tRNA. Functionally, formation of pseudouridine at positions 38, 39 and 40 in the anticodon stem and loop of transfer RNAs. This chain is tRNA pseudouridine synthase A, found in Methylobacterium nodulans (strain LMG 21967 / CNCM I-2342 / ORS 2060).